Reading from the N-terminus, the 429-residue chain is Serine--tRNA ligase (429 aa).

235 to 237 is a binding site for L-serine; sequence TAE. Position 266–268 (266–268) interacts with ATP; it reads RSE. Position 289 (Glu-289) interacts with L-serine. Position 353 to 356 (353 to 356) interacts with ATP; it reads EISS. Ser-389 serves as a coordination point for L-serine.

It belongs to the class-II aminoacyl-tRNA synthetase family. Type-1 seryl-tRNA synthetase subfamily. As to quaternary structure, homodimer. The tRNA molecule binds across the dimer.

The protein resides in the cytoplasm. The enzyme catalyses tRNA(Ser) + L-serine + ATP = L-seryl-tRNA(Ser) + AMP + diphosphate + H(+). It carries out the reaction tRNA(Sec) + L-serine + ATP = L-seryl-tRNA(Sec) + AMP + diphosphate + H(+). It participates in aminoacyl-tRNA biosynthesis; selenocysteinyl-tRNA(Sec) biosynthesis; L-seryl-tRNA(Sec) from L-serine and tRNA(Sec): step 1/1. Functionally, catalyzes the attachment of serine to tRNA(Ser). Is also able to aminoacylate tRNA(Sec) with serine, to form the misacylated tRNA L-seryl-tRNA(Sec), which will be further converted into selenocysteinyl-tRNA(Sec). In Haemophilus influenzae (strain PittEE), this protein is Serine--tRNA ligase.